The following is a 333-amino-acid chain: Tryptophan--tRNA ligase (333 aa).

ATP-binding positions include 11 to 13 (QPS) and 19 to 20 (GN). The 'HIGH' region motif lies at 12-20 (PSGELTIGN). Aspartate 135 is an L-tryptophan binding site. ATP is bound by residues 147 to 149 (GED), valine 186, and 195 to 199 (KMSKS). The short motif at 195–199 (KMSKS) is the 'KMSKS' region element.

This sequence belongs to the class-I aminoacyl-tRNA synthetase family. Homodimer.

Its subcellular location is the cytoplasm. The catalysed reaction is tRNA(Trp) + L-tryptophan + ATP = L-tryptophyl-tRNA(Trp) + AMP + diphosphate + H(+). Catalyzes the attachment of tryptophan to tRNA(Trp). This is Tryptophan--tRNA ligase from Pasteurella multocida (strain Pm70).